The chain runs to 387 residues: 3-ketoacyl-CoA thiolase (387 aa).

The active-site Acyl-thioester intermediate is the C91. Catalysis depends on proton acceptor residues H343 and C373.

Belongs to the thiolase-like superfamily. Thiolase family. As to quaternary structure, heterotetramer of two alpha chains (FadB) and two beta chains (FadA).

The protein resides in the cytoplasm. The catalysed reaction is an acyl-CoA + acetyl-CoA = a 3-oxoacyl-CoA + CoA. The protein operates within lipid metabolism; fatty acid beta-oxidation. In terms of biological role, catalyzes the final step of fatty acid oxidation in which acetyl-CoA is released and the CoA ester of a fatty acid two carbons shorter is formed. The protein is 3-ketoacyl-CoA thiolase of Salmonella paratyphi A (strain ATCC 9150 / SARB42).